The primary structure comprises 178 residues: Gamma-crystallin M1 (178 aa).

Beta/gamma crystallin 'Greek key' domains are found at residues 2-40 (GKII…RVES) and 41-86 (GCFM…RMIP). The tract at residues 87–91 (PYRGS) is connecting peptide. 2 Beta/gamma crystallin 'Greek key' domains span residues 92-132 (YRMR…HVMD) and 133-175 (GHWL…RRIT).

The protein belongs to the beta/gamma-crystallin family. In terms of assembly, monomer.

Crystallins are the dominant structural components of the vertebrate eye lens. The sequence is that of Gamma-crystallin M1 from Cyprinus carpio (Common carp).